The primary structure comprises 266 residues: Vitamin B12-binding protein (266 aa).

A signal peptide spans 1–22; that stretch reads MVKQMFRALVALLLTLPVWLYA. The Fe/B12 periplasmic-binding domain occupies 25–266; it reads RVITLSPANT…QLCNALSQVN (242 aa). Residues Tyr-50 and 242–246 each bind cyanocob(III)alamin; that span reads DWFER. Cysteines 183 and 259 form a disulfide.

This sequence belongs to the BtuF family. As to quaternary structure, the complex is composed of two ATP-binding proteins (BtuD), two transmembrane proteins (BtuC) and a solute-binding protein (BtuF).

The protein localises to the periplasm. Part of the ABC transporter complex BtuCDF involved in vitamin B12 import. Binds vitamin B12 and delivers it to the periplasmic surface of BtuC. The polypeptide is Vitamin B12-binding protein (Salmonella choleraesuis (strain SC-B67)).